The following is a 975-amino-acid chain: Probable ATP-dependent RNA helicase CG8611 (975 aa).

Residues 1-24 (MVENISLNVTVKSSARKNQQQSPA) show a composition bias toward polar residues. Disordered regions lie at residues 1–38 (MVEN…QDFD), 50–104 (AIVV…DDLM), and 127–295 (TTKP…FRTK). Over residues 64–94 (PTNSSVPNTTKSPTPSVSSSKSAISTLSASP) the composition is skewed to low complexity. Ser-75 and Ser-99 each carry phosphoserine. A compositionally biased stretch (basic and acidic residues) spans 190–203 (QLEEERRQKRREEG). 3 positions are modified to phosphoserine: Ser-210, Ser-220, and Ser-224. Positions 242–261 (IEDSGESGEESATSDEEPDE) are enriched in acidic residues. The span at 269–285 (QEKEPKQTAKKPPKAEE) shows a compositional bias: basic and acidic residues. A Q motif motif is present at residues 327 to 356 (SKISTLGLHPHAVKNLEDLLSIRELTSVQQ). The Helicase ATP-binding domain occupies 359–548 (IPEVLQGKDV…GLTLKNPLYI (190 aa)). 372-379 (SQTGSGKT) provides a ligand contact to ATP. Positions 485 to 488 (DEAD) match the DEAD box motif. The Helicase C-terminal domain occupies 616-789 (LLAKEVDASP…DMYAYLQTLL (174 aa)). The residue at position 667 (Ser-667) is a Phosphoserine. Disordered regions lie at residues 915 to 942 (LQQR…VGRS) and 955 to 975 (NMSE…RKQA).

It belongs to the DEAD box helicase family. DDX31/DBP7 subfamily.

It catalyses the reaction ATP + H2O = ADP + phosphate + H(+). Probable ATP-dependent RNA helicase. The chain is Probable ATP-dependent RNA helicase CG8611 from Drosophila melanogaster (Fruit fly).